The chain runs to 54 residues: Large ribosomal subunit protein bL33A (54 aa).

It belongs to the bacterial ribosomal protein bL33 family.

This Streptomyces avermitilis (strain ATCC 31267 / DSM 46492 / JCM 5070 / NBRC 14893 / NCIMB 12804 / NRRL 8165 / MA-4680) protein is Large ribosomal subunit protein bL33A.